Consider the following 347-residue polypeptide: NADH-ubiquinone oxidoreductase chain 2 (347 aa).

Transmembrane regions (helical) follow at residues 13-33 (IILG…WIGF), 59-79 (YFLT…TNLL), 96-116 (AVMT…FWVP), 122-142 (IPLS…LSVL), 149-169 (VSPT…GWGG), 178-198 (ILAY…AYNP), 201-221 (TLLN…LFMF), 247-267 (IMLS…WMII), 274-294 (ESLL…YFYM), and 323-343 (VPLL…APAL).

It belongs to the complex I subunit 2 family. In terms of assembly, core subunit of respiratory chain NADH dehydrogenase (Complex I) which is composed of 45 different subunits. Interacts with TMEM242.

Its subcellular location is the mitochondrion inner membrane. The catalysed reaction is a ubiquinone + NADH + 5 H(+)(in) = a ubiquinol + NAD(+) + 4 H(+)(out). Its function is as follows. Core subunit of the mitochondrial membrane respiratory chain NADH dehydrogenase (Complex I) which catalyzes electron transfer from NADH through the respiratory chain, using ubiquinone as an electron acceptor. Essential for the catalytic activity and assembly of complex I. The sequence is that of NADH-ubiquinone oxidoreductase chain 2 from Megaderma spasma (Lesser false vampire bat).